The sequence spans 608 residues: Signal transduction histidine-protein kinase AtoS (608 aa).

Topologically, residues 1–15 (MHYMKWIYPRRLRNQ) are cytoplasmic. The helical transmembrane segment at 16-36 (MILMAILMVIVPTLTIGYIVE) threads the bilayer. The Periplasmic segment spans residues 37–189 (TEGRSAVLSE…DIRRQAWKMD (153 aa)). Residues 190–210 (VRIIIVLTAGLLISLLLIVLF) form a helical membrane-spanning segment. Residues 211 to 608 (SRRLSANIDI…PINPQGNQTV (398 aa)) are Cytoplasmic-facing. The 51-residue stretch at 212–262 (RRLSANIDIITDGLSTLAQNIPTRLPQLPGEMGQISQSVNNLAQALRETRT) folds into the HAMP domain. Residues 260 to 305 (TRTLNDLIIENAADGVIAIDRQGDVTTMNPAAEVITGYQRHELVGQ) form the PAS domain. The PAC domain occupies 326 to 382 (HGTEHVALEISFPGRDRTIELSVTTSRIHNTHGEMIGALVIFSDLTARKETQRRMAQ). The 208-residue stretch at 395–602 (GVAHEVRNPL…TFTLILPINP (208 aa)) folds into the Histidine kinase domain. His-398 is modified (phosphohistidine; by autocatalysis).

Homodimer. Post-translationally, autophosphorylated. Each AtoS molecule may phosphorylate its partner within the dimer rather than phosphorylating itself.

It is found in the cell inner membrane. It catalyses the reaction ATP + protein L-histidine = ADP + protein N-phospho-L-histidine.. Member of the two-component regulatory system AtoS/AtoC. In the presence of acetoacetate, AtoS/AtoC stimulates the expression of the atoDAEB operon, leading to short chain fatty acid catabolism and activation of the poly-(R)-3-hydroxybutyrate (cPHB) biosynthetic pathway. Also induces the operon in response to spermidine. Involved in the regulation of motility and chemotaxis, via transcriptional induction of the flagellar regulon. AtoS is a membrane-associated kinase that phosphorylates and activates AtoC in response to environmental signals. In Escherichia coli (strain K12), this protein is Signal transduction histidine-protein kinase AtoS (atoS).